The sequence spans 66 residues: Beta-toxin Chui2 (66 aa).

Residues K1–N66 enclose the LCN-type CS-alpha/beta domain. 4 disulfide bridges follow: C12/C65, C16/C41, C25/C46, and C29/C48. N66 is modified (asparagine amide).

It belongs to the long (4 C-C) scorpion toxin superfamily. Sodium channel inhibitor family. Beta subfamily. As to expression, expressed by the venom gland.

It localises to the secreted. Its function is as follows. Beta toxins bind voltage-independently at site-4 of sodium channels (Nav) and shift the voltage of activation toward more negative potentials thereby affecting sodium channel activation and promoting spontaneous and repetitive firing. This is Beta-toxin Chui2 from Centruroides huichol (Scorpion).